We begin with the raw amino-acid sequence, 233 residues long: Uridylate kinase (233 aa).

Residue 7-10 (KISG) participates in ATP binding. Glycine 49 contacts UMP. Glycine 50 and arginine 54 together coordinate ATP. UMP is bound by residues aspartate 68 and 129 to 136 (TGNPFFTT). Threonine 156, tyrosine 162, and aspartate 165 together coordinate ATP.

Belongs to the UMP kinase family. Homohexamer.

It is found in the cytoplasm. It catalyses the reaction UMP + ATP = UDP + ADP. It participates in pyrimidine metabolism; CTP biosynthesis via de novo pathway; UDP from UMP (UMPK route): step 1/1. Its activity is regulated as follows. Inhibited by UTP. In terms of biological role, catalyzes the reversible phosphorylation of UMP to UDP. The sequence is that of Uridylate kinase from Neorickettsia sennetsu (strain ATCC VR-367 / Miyayama) (Ehrlichia sennetsu).